The chain runs to 1332 residues: DEMETER-like protein 2 (1332 aa).

The span at 1–23 (MEVEGEVREKEARVKGRQPETEV) shows a compositional bias: basic and acidic residues. 3 disordered regions span residues 1 to 29 (MEVE…GLPQ), 137 to 242 (VSTS…TSEE), and 280 to 317 (VEGS…KKTD). A compositionally biased stretch (polar residues) spans 137–153 (VSTSTQRTEPESPQITL). The span at 223 to 236 (SKAGIKKSSIAATA) shows a compositional bias: low complexity. Over residues 301–312 (PKGRRGQRRSNG) the composition is skewed to basic residues. The DEMETER stretch occupies residues 497–595 (KVQLDPETSR…AYMDLAAEFP (99 aa)). Residues 739 to 753 (HQQDPESTIQTQDQQ) are compositionally biased toward polar residues. The interval 739 to 810 (HQQDPESTIQ…GGRKRERTER (72 aa)) is disordered. Over residues 763–777 (KNRKKPTTSKPKKKS) the composition is skewed to basic residues. Positions 787–810 (KSVDWDSLRKEAESGGRKRERTER) are enriched in basic and acidic residues. [4Fe-4S] cluster is bound by residues cysteine 970, cysteine 977, cysteine 980, and cysteine 986.

It belongs to the DNA glycosylase family. DEMETER subfamily. [4Fe-4S] cluster is required as a cofactor.

The protein resides in the nucleus. Functionally, potential transcriptional activator that may act by nicking the target promoter. Catalyzes the release of 5-methylcytosine (5-meC) from DNA by a glycosylase/lyase mechanism. The chain is DEMETER-like protein 2 (DML2) from Arabidopsis thaliana (Mouse-ear cress).